A 113-amino-acid chain; its full sequence is Large ribosomal subunit protein uL22 (113 aa).

It belongs to the universal ribosomal protein uL22 family. As to quaternary structure, part of the 50S ribosomal subunit.

This protein binds specifically to 23S rRNA; its binding is stimulated by other ribosomal proteins, e.g. L4, L17, and L20. It is important during the early stages of 50S assembly. It makes multiple contacts with different domains of the 23S rRNA in the assembled 50S subunit and ribosome. Its function is as follows. The globular domain of the protein is located near the polypeptide exit tunnel on the outside of the subunit, while an extended beta-hairpin is found that lines the wall of the exit tunnel in the center of the 70S ribosome. The chain is Large ribosomal subunit protein uL22 from Syntrophomonas wolfei subsp. wolfei (strain DSM 2245B / Goettingen).